The primary structure comprises 147 residues: uncharacterized protein (147 aa).

The interval methionine 1–arginine 37 is disordered. Polar residues predominate over residues histidine 15–valine 29. The 77-residue stretch at proline 71–valine 147 folds into the Cytochrome b5 heme-binding domain. The heme site is built by histidine 106 and histidine 129.

Belongs to the cytochrome b5 family.

This is an uncharacterized protein from Schizosaccharomyces pombe (strain 972 / ATCC 24843) (Fission yeast).